A 149-amino-acid polypeptide reads, in one-letter code: ATP synthase epsilon chain (149 aa).

Composition is skewed to basic and acidic residues over residues 99 to 116 (DVERAESAEERAKRRLEE) and 123 to 134 (RETHEAARDRAR). Residues 99–149 (DVERAESAEERAKRRLEEGVQEEERETHEAARDRARNRLRVAMGKVGTRQS) form a disordered region.

This sequence belongs to the ATPase epsilon chain family. In terms of assembly, F-type ATPases have 2 components, CF(1) - the catalytic core - and CF(0) - the membrane proton channel. CF(1) has five subunits: alpha(3), beta(3), gamma(1), delta(1), epsilon(1). CF(0) has three main subunits: a, b and c.

The protein resides in the cell inner membrane. Its function is as follows. Produces ATP from ADP in the presence of a proton gradient across the membrane. The protein is ATP synthase epsilon chain of Salinibacter ruber (strain DSM 13855 / M31).